Here is a 506-residue protein sequence, read N- to C-terminus: Probable Xaa-Pro aminopeptidase PAAG_05466 (506 aa).

Residues Asp285, Asp296, Glu433, and Glu471 each coordinate Mn(2+).

The protein belongs to the peptidase M24B family. The cofactor is Mn(2+).

The catalysed reaction is Release of any N-terminal amino acid, including proline, that is linked to proline, even from a dipeptide or tripeptide.. In terms of biological role, catalyzes the removal of a penultimate prolyl residue from the N-termini of peptides. This Paracoccidioides lutzii (strain ATCC MYA-826 / Pb01) (Paracoccidioides brasiliensis) protein is Probable Xaa-Pro aminopeptidase PAAG_05466.